The primary structure comprises 485 residues: Putative aldehyde dehydrogenase AldY (485 aa).

231-236 (GSTAVG) provides a ligand contact to NAD(+). Residues Glu-253 and Cys-287 contribute to the active site.

This sequence belongs to the aldehyde dehydrogenase family.

It carries out the reaction an aldehyde + NAD(+) + H2O = a carboxylate + NADH + 2 H(+). Its function is as follows. May contribute to protect cells against stress due to ethanol and related compounds. This chain is Putative aldehyde dehydrogenase AldY (aldY), found in Bacillus subtilis (strain 168).